Reading from the N-terminus, the 735-residue chain is Disintegrin and metalloproteinase domain-containing protein 2 (735 aa).

The signal sequence occupies residues 1–16; that stretch reads MWRVLFLLSGLGGLWM. A propeptide spanning residues 17-174 is cleaved from the precursor; that stretch reads DSNFDSLPVQ…FKLQSIEPQK (158 aa). The Extracellular segment spans residues 17 to 686; it reads DSNFDSLPVQ…ENVYHSKPMR (670 aa). Residues asparagine 76, asparagine 122, and asparagine 220 are each glycosylated (N-linked (GlcNAc...) asparagine). In terms of domain architecture, Peptidase M12B spans 178 to 375; the sequence is KYIEMHVVVE…QKSQCLHNQP (198 aa). Intrachain disulfides connect cysteine 287–cysteine 370, cysteine 329–cysteine 354, cysteine 331–cysteine 336, and cysteine 445–cysteine 465. N-linked (GlcNAc...) asparagine glycosylation is found at asparagine 353, asparagine 459, and asparagine 566. The Disintegrin domain maps to 384 to 473; sequence QAVCGNAKLE…SCPENHFIQT (90 aa). The EGF-like domain maps to 612–645; sequence LGYDCTTDKCNHRGVCNNKKHCHCSASYLPPDCS. 3 cysteine pairs are disulfide-bonded: cysteine 616-cysteine 627, cysteine 621-cysteine 633, and cysteine 635-cysteine 644. Residues 687–707 form a helical membrane-spanning segment; the sequence is WPLFLFIPFFIIFCVLIAIMV. At 708–735 the chain is on the cytoplasmic side; sequence KVHFQRKKWRTEDYSTDEQPESESEPKG. A Phosphoserine modification is found at serine 729.

Heterodimer with ADAM1/fertilin subunit alpha. The signal and the metalloprotease domain are cleaved during the epididymal maturation of the spermatozoa. In terms of tissue distribution, expressed specifically in testis.

Its subcellular location is the membrane. In terms of biological role, sperm surface membrane protein that may be involved in sperm-egg plasma membrane adhesion and fusion during fertilization. Could have a direct role in sperm-zona binding or migration of sperm from the uterus into the oviduct. Interactions with egg membrane could be mediated via binding between its disintegrin-like domain to one or more integrins receptors on the egg. This is a non catalytic metalloprotease-like protein. The sequence is that of Disintegrin and metalloproteinase domain-containing protein 2 (ADAM2) from Macaca fascicularis (Crab-eating macaque).